The chain runs to 798 residues: Transferrin receptor protein 2 (798 aa).

Residues 1–81 (MEQRWGLLRK…WAAAGRKAAP (81 aa)) lie on the Cytoplasmic side of the membrane. Positions 23-26 (YRRV) match the Endocytosis signal motif. The tract at residues 25–44 (RVEGPQLENLEEEDREEGEE) is disordered. Residues 33–44 (NLEEEDREEGEE) are compositionally biased toward acidic residues. The helical; Signal-anchor for type II membrane protein transmembrane segment at 82-102 (YLVLTTLLIFTGAFLLGYVAF) threads the bilayer. Topologically, residues 103–798 (RGSCQACGDS…GDVWNIDNNF (696 aa)) are extracellular. N-linked (GlcNAc...) asparagine glycosylation is found at Asn235, Asn334, and Asn535.

It belongs to the peptidase M28 family. M28B subfamily. As to quaternary structure, homodimer.

The protein localises to the cell membrane. Mediates cellular uptake of transferrin-bound iron in a non-iron dependent manner. May be involved in iron metabolism, hepatocyte function and erythrocyte differentiation. This Rattus norvegicus (Rat) protein is Transferrin receptor protein 2 (Tfr2).